The following is a 458-amino-acid chain: ATP synthase subunit beta (458 aa).

An ATP-binding site is contributed by 148–155 (GGAGVGKT).

This sequence belongs to the ATPase alpha/beta chains family. F-type ATPases have 2 components, CF(1) - the catalytic core - and CF(0) - the membrane proton channel. CF(1) has five subunits: alpha(3), beta(3), gamma(1), delta(1), epsilon(1). CF(0) has three main subunits: a(1), b(2) and c(9-12). The alpha and beta chains form an alternating ring which encloses part of the gamma chain. CF(1) is attached to CF(0) by a central stalk formed by the gamma and epsilon chains, while a peripheral stalk is formed by the delta and b chains.

The protein resides in the cell inner membrane. It catalyses the reaction ATP + H2O + 4 H(+)(in) = ADP + phosphate + 5 H(+)(out). In terms of biological role, produces ATP from ADP in the presence of a proton gradient across the membrane. The catalytic sites are hosted primarily by the beta subunits. This is ATP synthase subunit beta from Ectopseudomonas mendocina (strain ymp) (Pseudomonas mendocina).